We begin with the raw amino-acid sequence, 208 residues long: Ribosomal RNA small subunit methyltransferase G (208 aa).

Residues G76, L81, 127–128 (VE), and R142 each bind S-adenosyl-L-methionine.

This sequence belongs to the methyltransferase superfamily. RNA methyltransferase RsmG family.

It is found in the cytoplasm. It catalyses the reaction guanosine(527) in 16S rRNA + S-adenosyl-L-methionine = N(7)-methylguanosine(527) in 16S rRNA + S-adenosyl-L-homocysteine. Its function is as follows. Specifically methylates the N7 position of guanine in position 527 of 16S rRNA. This is Ribosomal RNA small subunit methyltransferase G from Legionella pneumophila subsp. pneumophila (strain Philadelphia 1 / ATCC 33152 / DSM 7513).